The primary structure comprises 547 residues: Intercellular adhesion molecule 3 (547 aa).

The first 29 residues, Met1–Gly29, serve as a signal peptide directing secretion. Topologically, residues Gln30–His485 are extracellular. The region spanning Gly46–Ser103 is the Ig-like C2-type 1 domain. 6 N-linked (GlcNAc...) asparagine glycosylation sites follow: Asn52, Asn84, Asn87, Asn101, Asn110, and Asn134. Intrachain disulfides connect Cys53/Cys96 and Cys57/Cys100. In terms of domain architecture, Ig-like C2-type 2 spans Gly132–Gln197. A disulfide bridge links Cys139 with Cys190. N-linked (GlcNAc...) asparagine glycosylation is found at Asn206, Asn264, Asn295, Asn308, Asn320, Asn363, Asn389, Asn453, and Asn457. The Ig-like C2-type 3 domain occupies Glu234–Glu301. A disulfide bridge links Cys241 with Cys294. The Ig-like C2-type 4 domain maps to Gly329 to Asp382. Cys336 and Cys375 are oxidised to a cystine. An Ig-like C2-type 5 domain is found at Lys416 to Gly469. Cysteines 423 and 462 form a disulfide. Residues Phe486–Phe510 traverse the membrane as a helical segment. Residues Arg511–Glu547 are Cytoplasmic-facing.

It belongs to the immunoglobulin superfamily. ICAM family. In terms of assembly, interacts with moesin/MSN. In terms of processing, upon stimulation by a physiologic stimuli becomes rapidly and transiently phosphorylated on serine residues. In terms of tissue distribution, leukocytes.

It localises to the membrane. In terms of biological role, ICAM proteins are ligands for the leukocyte adhesion protein LFA-1 (integrin alpha-L/beta-2). ICAM3 is also a ligand for integrin alpha-D/beta-2. In association with integrin alpha-L/beta-2, contributes to apoptotic neutrophil phagocytosis by macrophages. The polypeptide is Intercellular adhesion molecule 3 (ICAM3) (Pan troglodytes (Chimpanzee)).